The primary structure comprises 364 residues: Pectinesterase (364 aa).

Residues 1 to 22 (MSCIAVEAVLLGILLYIPIVLS) form the signal peptide. Asn-103 carries an N-linked (GlcNAc...) asparagine glycan. Residue Asp-220 is part of the active site.

The protein resides in the secreted. The enzyme catalyses [(1-&gt;4)-alpha-D-galacturonosyl methyl ester](n) + n H2O = [(1-&gt;4)-alpha-D-galacturonosyl](n) + n methanol + n H(+). It functions in the pathway glycan metabolism; pectin degradation; 2-dehydro-3-deoxy-D-gluconate from pectin: step 1/5. Functionally, catalyzes the demethylesterification of homogalacturonan components of pectin. The polypeptide is Pectinesterase (Parthenium hysterophorus (Santa Maria feverfew)).